Reading from the N-terminus, the 193-residue chain is uncharacterized protein (193 aa).

Arg8 is a substrate binding site. The active-site Tele-phosphohistidine intermediate is His9. Substrate contacts are provided by Asn15, Gln21, and Arg58. The active-site Proton donor/acceptor is Glu82. His139 contributes to the substrate binding site.

Belongs to the phosphoglycerate mutase family. GpmB subfamily.

Phosphatase with broad substrate specificity. Does not have phosphoglycerate mutase activity. This is an uncharacterized protein from Bacillus subtilis (strain 168).